Here is a 591-residue protein sequence, read N- to C-terminus: MAQESADLASDCQSWLQKLSAWEQASSEETQKDTCLHLSGFQEFLRQMYEILKEMDSDAILERFPTIGQLLAKACWNPLILAYDESQKIVIWCLCCLMNKEPRTSAESGLNSWIRGLLSHVLSAFRFDMKEVCLFTKSLGYESIDYYPSLLKNMVLSLVSELRESHLNGLSTQSRMAPERMMSLSEVCVPLVTLPDMEPLVEALLTYHGHEPQEVLAPEFFEAVNEAFLSEKIVLPTSSVVSLWFRHLPSLEKATLHLFEKLFSSKIICLRRMECCIRESFLPQAACQPAIFRIVDEMFRFVLLETDGAPEVLAALQVFTSCLVEALKKENKQLTFALRTYFPYGAPCLAAALSQHPEAIPQGHRLQPLLHISQLLREAVEDCTRGSPRNPFESWFLFVHFGGWVDLAVAELLLREEAEPPAGLLWLLVFYYSPQDGSQQREQSMVELKVLINRLLMLLRSGPLSATDLQEAAESPSGDPRPPVCGQLVRRLLLSLLLWTPEGHAIVWEAVTHGPTFEITGPGCCPRIWRSTRPQHRPRAHLCCTEMAHTDAVIHEIIGFLDQTLYRSQHLCVEASRKLARDLLKELQAQV.

As to quaternary structure, belongs to the multisubunit FA complex composed of FANCA, FANCB, FANCC, FANCE, FANCF, FANCG, FANCL/PHF9 and FANCM. This complex may also include HSP70. Interacts with ZBTB32. Upon IFNG induction, interacts with STAT1. Interacts with CDK1. Interacts with EIF2AK2. As to expression, ubiquitous.

The protein localises to the nucleus. The protein resides in the cytoplasm. Functionally, DNA repair protein that may operate in a postreplication repair or a cell cycle checkpoint function. May be implicated in interstrand DNA cross-link repair and in the maintenance of normal chromosome stability. Upon IFNG induction, may facilitate STAT1 activation by recruiting STAT1 to IFNGR1. This Mus musculus (Mouse) protein is Fanconi anemia group C protein homolog (Fancc).